The following is a 252-amino-acid chain: Phosphate import ATP-binding protein PstB 1 (252 aa).

Positions 6-247 (LKVNDLSVYY…PQKQETEDYI (242 aa)) constitute an ABC transporter domain. 38–45 (GPSGSGKS) serves as a coordination point for ATP.

It belongs to the ABC transporter superfamily. Phosphate importer (TC 3.A.1.7) family. In terms of assembly, the complex is composed of two ATP-binding proteins (PstB), two transmembrane proteins (PstC and PstA) and a solute-binding protein (PstS).

It localises to the cell membrane. The catalysed reaction is phosphate(out) + ATP + H2O = ADP + 2 phosphate(in) + H(+). In terms of biological role, part of the ABC transporter complex PstSACB involved in phosphate import. Responsible for energy coupling to the transport system. This Streptococcus mutans serotype c (strain ATCC 700610 / UA159) protein is Phosphate import ATP-binding protein PstB 1.